Reading from the N-terminus, the 380-residue chain is DNA replication and repair protein RecF (380 aa).

30–37 is an ATP binding site; that stretch reads GPNGFGKT.

The protein belongs to the RecF family.

Its subcellular location is the cytoplasm. The RecF protein is involved in DNA metabolism; it is required for DNA replication and normal SOS inducibility. RecF binds preferentially to single-stranded, linear DNA. It also seems to bind ATP. The chain is DNA replication and repair protein RecF from Mycobacterium sp. (strain JLS).